We begin with the raw amino-acid sequence, 589 residues long: (E)-beta-ocimene synthase, chloroplastic (589 aa).

The transit peptide at 1-25 (MAAHNLCFNSAFVCNVHHQKTQHFP) directs the protein to the chloroplast. Residues Arg302, Asp339, Asp343, Arg480, and Asn483 each contribute to the (2E,6E)-farnesyl diphosphate site. The Mg(2+) site is built by Asp339 and Asp343. Residues 339–343 (DDIYD) carry the DDXXD motif motif. Positions 483, 487, and 491 each coordinate Mg(2+).

It belongs to the terpene synthase family. Tpsb subfamily. It depends on Mg(2+) as a cofactor. Requires Mn(2+) as cofactor. Expressed exclusively in flowers.

The protein resides in the plastid. It is found in the chloroplast. It catalyses the reaction (2E,6E)-farnesyl diphosphate = (3E,6E)-alpha-farnesene + diphosphate. It participates in secondary metabolite biosynthesis; terpenoid biosynthesis. Its function is as follows. Predominantly involved in monoterpene (C10) biosynthesis. Using GPP as substrate, the major product is (E)-beta-ocimene with minor amounts of (Z)-beta-ocimene and myrcene. Using FPP as substrate, could also be able to synthesize in vitro sesquiterpenes (C15) with (E,E)-alpha-farnesene as the major product and with (Z,E)-alpha-farnesene and (E,E)-beta-farnesene as minor products. In Arabidopsis thaliana (Mouse-ear cress), this protein is (E)-beta-ocimene synthase, chloroplastic (TPS02).